The following is a 576-amino-acid chain: MNEKHPGPLVVSGKLSDGERMKSESNFLRGTIAEDLNNGLTGGFSGDNFLLIRFHGMYQQDDRDIRAERAEQKLEPRHAMMLRCRLPGGIITPQQWLGIDKFAADNTLYGSIRITNRQTFQFHGILKGNVKPAHQLLNELGLDALATANDVNRNVLCTSNPVESALHQEAYEWAKKISEHLLPRTRAYAEIWLDAEKVATTDEEPILGATYLPRKFKTTVVIPPQNDVDLHANDLNFVAVADKGKLIGFNVLVGGGLSIAHGDKNTYPRKASEFGYIPLKHTLAIAEAVVTTQRDWGNRTDRKNAKTKYTLERVGVETFKAEVEKRAGVSFSAIKPYQFTGRGDRIGWVKGVDKKWHLTLFIENGRLLDYPGRSLKTGVAEIAKIHQGDFRLTANQNLIVAGVPEKDKARIEALAREHGLMDDHVTSQRENSMACVSFPTCPLAMAEAERFLPEFVTRVEGILQQHGLADEHIVLRVTGCPNGCGRALLAEVGLVGKAVGRYNLHLGGNREGTRIPRMYRENITADEILLITDQLVGRWAKERHVDEGFGDFVIRAGVIAPVIDSARDFYDVQEAM.

[4Fe-4S] cluster-binding residues include Cys435, Cys441, Cys480, and Cys484. Cys484 is a siroheme binding site.

Belongs to the nitrite and sulfite reductase 4Fe-4S domain family. As to quaternary structure, alpha(8)-beta(8). The alpha component is a flavoprotein, the beta component is a hemoprotein. Siroheme is required as a cofactor. The cofactor is [4Fe-4S] cluster.

It carries out the reaction hydrogen sulfide + 3 NADP(+) + 3 H2O = sulfite + 3 NADPH + 4 H(+). Its pathway is sulfur metabolism; hydrogen sulfide biosynthesis; hydrogen sulfide from sulfite (NADPH route): step 1/1. Component of the sulfite reductase complex that catalyzes the 6-electron reduction of sulfite to sulfide. This is one of several activities required for the biosynthesis of L-cysteine from sulfate. This Yersinia pseudotuberculosis serotype IB (strain PB1/+) protein is Sulfite reductase [NADPH] hemoprotein beta-component.